Reading from the N-terminus, the 190-residue chain is Jupiter microtubule associated homolog 2 (190 aa).

The residue at position 1 (M1) is an N-acetylmethionine. Residues 1 to 190 (MFQVPDSEGG…PGGKSSISFY (190 aa)) form a disordered region. S30 is modified (phosphoserine). T35 carries the post-translational modification Phosphothreonine. Residues 35–44 (TPSSRPNRMA) are compositionally biased toward polar residues. Phosphoserine is present on residues S45, S69, and S97. Positions 110–129 (KPKDHVFLCEGEEPKSDLKA) are enriched in basic and acidic residues. Residues S132 and S144 each carry the phosphoserine modification. Residues 139–167 (PGEKGSARKAGPAKEQEPMPTVDSHEPRL) show a composition bias toward basic and acidic residues.

Belongs to the JUPITER family. Monomer. Dimer. Interacts with TPCN1. Expressed in liver, kidney, prostate, testis and uterus.

The protein resides in the cytoplasm. It localises to the nucleus. Nicotinic acid adenine dinucleotide phosphate (NAADP) binding protein required for NAADP-evoked intracellular calcium release. Confers NAADP-sensitivity to the two pore channels (TPCs) complex. Enables NAADP to activate Ca(2+) release from the endoplasmic reticulum through ryanodine receptors. Functionally, (Microbial infection) Involved in the endolysosomal trafficking of human coronavirus SARS-CoV-2. The chain is Jupiter microtubule associated homolog 2 from Homo sapiens (Human).